Here is a 395-residue protein sequence, read N- to C-terminus: Capsid protein (395 aa).

A compositionally biased stretch (basic residues) spans 1–41 (MARKYAKRSKSRPRTARRSPKSRSRPRSRAPRRKAPSRPRI). The tract at residues 1–51 (MARKYAKRSKSRPRTARRSPKSRSRPRSRAPRRKAPSRPRIQRVNPVRRPM) is disordered. A Nuclear localization signal motif is present at residues 2–9 (ARKYAKRS).

Its subcellular location is the host nucleus. It is found in the virion. In terms of biological role, self-assembles to form the virion icosahedral capsid. The chain is Capsid protein from Chaetoceros setoense (Chaetoceros setoense DNA virus).